Consider the following 134-residue polypeptide: Profilin-3 (134 aa).

The cysteines at positions 13 and 118 are disulfide-linked. Positions 84–100 (AVIRGKKGSGGITIKKT) match the Involved in PIP2 interaction motif. Threonine 114 carries the post-translational modification Phosphothreonine.

It belongs to the profilin family. In terms of assembly, occurs in many kinds of cells as a complex with monomeric actin in a 1:1 ratio. Phosphorylated by MAP kinases.

Its subcellular location is the cytoplasm. It localises to the cytoskeleton. Its function is as follows. Binds to actin and affects the structure of the cytoskeleton. At high concentrations, profilin prevents the polymerization of actin, whereas it enhances it at low concentrations. This Olea europaea (Common olive) protein is Profilin-3.